The chain runs to 157 residues: Ribosome maturation factor RimP (157 aa).

It belongs to the RimP family.

It is found in the cytoplasm. In terms of biological role, required for maturation of 30S ribosomal subunits. This is Ribosome maturation factor RimP from Limosilactobacillus reuteri (strain DSM 20016) (Lactobacillus reuteri).